Here is a 318-residue protein sequence, read N- to C-terminus: Ficolin-1-B (318 aa).

The N-terminal stretch at 1 to 19 (MTRWVQTFLLLVAVIRSYA) is a signal peptide. A Collagen-like domain is found at 42-99 (GCPGIPGVPGPQGPSGPAGAKGEKGFPGIPGKMGPTGLKGERGISGPKGQKGDKGDPG). The Fibrinogen C-terminal domain maps to 100-318 (IPVVGMAQNC…VSEIKFRPQP (219 aa)). The cysteines at positions 109 and 137 are disulfide-linked. 2 N-linked (GlcNAc...) asparagine glycosylation sites follow: Asn205 and Asn222. Residue Asp253 coordinates Ca(2+). N-linked (GlcNAc...) asparagine glycosylation is present at Asn254. Residues Asp255 and Ser257 each coordinate Ca(2+). The cysteines at positions 261 and 274 are disulfide-linked. 273 to 275 (SCH) contributes to the a carbohydrate binding site. Residue Asn287 is glycosylated (N-linked (GlcNAc...) asparagine).

It belongs to the ficolin lectin family. In terms of assembly, homotrimer. May form higher-order oligomers. N-glycosylated. Expressed in peripheral blood leukocytes. Also detected at lower levels in spleen and lung.

The protein localises to the secreted. Functionally, may function in innate immunity through activation of the lectin complement pathway. Binds to GalNAc and GlcNAc carbohydrate moieties. The protein is Ficolin-1-B of Xenopus laevis (African clawed frog).